We begin with the raw amino-acid sequence, 511 residues long: Phosphoenolpyruvate carboxylase (511 aa).

This sequence belongs to the PEPCase type 2 family. In terms of assembly, homotetramer. Mg(2+) is required as a cofactor.

The catalysed reaction is oxaloacetate + phosphate = phosphoenolpyruvate + hydrogencarbonate. Its function is as follows. Catalyzes the irreversible beta-carboxylation of phosphoenolpyruvate (PEP) to form oxaloacetate (OAA), a four-carbon dicarboxylic acid source for the tricarboxylic acid cycle. The chain is Phosphoenolpyruvate carboxylase from Saccharolobus islandicus (strain Y.G.57.14 / Yellowstone #1) (Sulfolobus islandicus).